The primary structure comprises 371 residues: Anhydro-N-acetylmuramic acid kinase (371 aa).

12-20 (GTVLDGNID) contacts ATP.

This sequence belongs to the anhydro-N-acetylmuramic acid kinase family.

It catalyses the reaction 1,6-anhydro-N-acetyl-beta-muramate + ATP + H2O = N-acetyl-D-muramate 6-phosphate + ADP + H(+). Its pathway is amino-sugar metabolism; 1,6-anhydro-N-acetylmuramate degradation. The protein operates within cell wall biogenesis; peptidoglycan recycling. Functionally, catalyzes the specific phosphorylation of 1,6-anhydro-N-acetylmuramic acid (anhMurNAc) with the simultaneous cleavage of the 1,6-anhydro ring, generating MurNAc-6-P. Is required for the utilization of anhMurNAc either imported from the medium or derived from its own cell wall murein, and thus plays a role in cell wall recycling. The polypeptide is Anhydro-N-acetylmuramic acid kinase (Rhizobium rhizogenes (strain K84 / ATCC BAA-868) (Agrobacterium radiobacter)).